Consider the following 251-residue polypeptide: Aspartate/glutamate leucyltransferase (251 aa).

Belongs to the R-transferase family. Bpt subfamily.

Its subcellular location is the cytoplasm. The catalysed reaction is N-terminal L-glutamyl-[protein] + L-leucyl-tRNA(Leu) = N-terminal L-leucyl-L-glutamyl-[protein] + tRNA(Leu) + H(+). It catalyses the reaction N-terminal L-aspartyl-[protein] + L-leucyl-tRNA(Leu) = N-terminal L-leucyl-L-aspartyl-[protein] + tRNA(Leu) + H(+). Functions in the N-end rule pathway of protein degradation where it conjugates Leu from its aminoacyl-tRNA to the N-termini of proteins containing an N-terminal aspartate or glutamate. The chain is Aspartate/glutamate leucyltransferase from Xanthomonas oryzae pv. oryzae (strain MAFF 311018).